The following is a 269-amino-acid chain: Thymidylate synthase (269 aa).

Arginine 26 is a dUMP binding site. Histidine 56 serves as a coordination point for (6R)-5,10-methylene-5,6,7,8-tetrahydrofolate. 131–132 (RR) is a dUMP binding site. The Nucleophile role is filled by cysteine 151. DUMP is bound by residues 171 to 174 (RSAD), asparagine 182, and 212 to 214 (HIY). Aspartate 174 lines the (6R)-5,10-methylene-5,6,7,8-tetrahydrofolate pocket. (6R)-5,10-methylene-5,6,7,8-tetrahydrofolate is bound at residue alanine 268.

The protein belongs to the thymidylate synthase family. Bacterial-type ThyA subfamily. In terms of assembly, homodimer.

The protein localises to the cytoplasm. The catalysed reaction is dUMP + (6R)-5,10-methylene-5,6,7,8-tetrahydrofolate = 7,8-dihydrofolate + dTMP. It functions in the pathway pyrimidine metabolism; dTTP biosynthesis. Functionally, catalyzes the reductive methylation of 2'-deoxyuridine-5'-monophosphate (dUMP) to 2'-deoxythymidine-5'-monophosphate (dTMP) while utilizing 5,10-methylenetetrahydrofolate (mTHF) as the methyl donor and reductant in the reaction, yielding dihydrofolate (DHF) as a by-product. This enzymatic reaction provides an intracellular de novo source of dTMP, an essential precursor for DNA biosynthesis. The sequence is that of Thymidylate synthase from Leifsonia xyli subsp. xyli (strain CTCB07).